A 540-amino-acid polypeptide reads, in one-letter code: (13S,14R)-13-O-acetyl-1-hydroxy-N-methylcanadine 8-hydroxylase CYP82X1 (540 aa).

Residues 15–35 (FSIILVTTVSIVLLYSVFFWV) form a helical membrane-spanning segment. C483 contacts heme.

It belongs to the cytochrome P450 family. The cofactor is heme. Highly expressed in capsules. Expressed is stems.

The protein resides in the membrane. The enzyme catalyses (13S,14R)-13-O-acetyl-1-hydroxy-N-methylcanadine + reduced [NADPH--hemoprotein reductase] + O2 = (13S,14R)-13-O-acetyl-1,8-dihydroxy-N-methylcanadine + oxidized [NADPH--hemoprotein reductase] + H2O + H(+). It participates in alkaloid biosynthesis. Functionally, cytochrome P450 involved in the biosynthesis of the benzylisoquinoline alkaloid noscapine. Converts (13S,14R)-13-O-acetyl-1-hydroxy-N-methylcanadine to (13S,14R)-13-O-acetyl-1,8-dihydroxy-N-methylcanadine. This Papaver somniferum (Opium poppy) protein is (13S,14R)-13-O-acetyl-1-hydroxy-N-methylcanadine 8-hydroxylase CYP82X1.